The chain runs to 441 residues: METTIMVVAMDRLTYYKLTSRYLYYFCLDRLLSCHRLDLDRDRKINWRHPKYWNYNNIPKGEKPYLRHIDLWDYRGNFKDWIIENLRSIYCSPYYFESPRYELEYPAIDYNYWDWVIDIDFKGNFKKSKEIAKEVREIFKDYGVKDIHIKFSGSKGFHIWINARYLPNEILNKGYVEGSTILTNFLNFKLRKLLDFVGKEGDTGIDLSIYKENMTVTAPFSLYYADIEGKTPISIPFPINKVEKFKPIYLQNVKPYFIRKLTKYYENFGEIRGDLTDFVDDALRYYQATKKVNNDIKIDLEINTNKKAKPKVEHSKREYIKTTIGDKEVVLNKVKLESYLNELINSNWEDGKMRGCYYLTSLCKLLGYGRDKTIKLLNRWASKYGNKYIKHIDYEVRYLYDRNGKVCSIKWLKENIPEAKTQIEIYKKYYELDKNNYLVKK.

This is an uncharacterized protein from Methanocaldococcus jannaschii (strain ATCC 43067 / DSM 2661 / JAL-1 / JCM 10045 / NBRC 100440) (Methanococcus jannaschii).